A 178-amino-acid polypeptide reads, in one-letter code: Twist-related protein (178 aa).

Residues 20–71 (QQRACANRRERQRTKELNDAFTLLRKLIPSMPSDKMSKIHTLRIATDYISFL) form the bHLH domain.

Efficient DNA binding requires dimerization with another bHLH protein. Homodimer. Forms a heterodimer with hlh-2. As to expression, expressed in defecation-associated muscles and neuron-like cells in the head at the L1 stage. In later larvae, expressed in SM cells and their descendants. Not expressed in differentiated body wall or sex muscles.

Its subcellular location is the nucleus. Functionally, acts as a transcriptional regulator. Involved in postembryonic mesodermal cell fate specification. Activates ceh-24 and egl-15 during mesodermal patterning. This is Twist-related protein (hlh-8) from Caenorhabditis elegans.